A 201-amino-acid polypeptide reads, in one-letter code: Peptide deformylase (201 aa).

Residues C92 and H134 each coordinate Fe cation. E135 is an active-site residue. Residue H138 coordinates Fe cation.

This sequence belongs to the polypeptide deformylase family. It depends on Fe(2+) as a cofactor.

The catalysed reaction is N-terminal N-formyl-L-methionyl-[peptide] + H2O = N-terminal L-methionyl-[peptide] + formate. Removes the formyl group from the N-terminal Met of newly synthesized proteins. Requires at least a dipeptide for an efficient rate of reaction. N-terminal L-methionine is a prerequisite for activity but the enzyme has broad specificity at other positions. The sequence is that of Peptide deformylase from Rhodopirellula baltica (strain DSM 10527 / NCIMB 13988 / SH1).